We begin with the raw amino-acid sequence, 367 residues long: MISFETRTRMEELEKKYKDILSVVNENEVDREIEEIEKKLTDPSVWDDQKKAREYTQKLKRLKNISEDLKRVRSLFEDLEVAIELSDEDQEMAQHVEEIVQELEGAVKKLELEIILNGKYDPNNAYLSVHPGAGGTESQDWAQMLLRMYMRWAERKGFDVEIVEFQPGEEAGIKDATILIKGEYAYGYLKHESGVHRLVRISPFDAARRRHTSFASVNVIPEIDDDVDIEIRPEDLKIETFRASGHGGQYVNKTESAVRITHLPTGIVVSCQNERSQHQNKQTALKILKAKLYQLEMEKKQREIQEIQGELKDISWGNQIRSYVFHPYTMVKDHRTGVETANVDAVMDGDIDMFIEAELVYFARRSG.

N5-methylglutamine is present on Gln-249.

It belongs to the prokaryotic/mitochondrial release factor family. Post-translationally, methylated by PrmC. Methylation increases the termination efficiency of RF2.

It is found in the cytoplasm. Peptide chain release factor 2 directs the termination of translation in response to the peptide chain termination codons UGA and UAA. This is Peptide chain release factor 2 from Thermotoga petrophila (strain ATCC BAA-488 / DSM 13995 / JCM 10881 / RKU-1).